The primary structure comprises 376 residues: MKADFYETLGVQKGADEKELKSAFRKLAMQFHPDRNPGDHSCEHKFKEINEAYETLKDPQKRAAYDRFGHAAFEQGGMNGGAQGFGAGGFADIFEDIFGDMMGGRQRRSSGGRERGADLRYNMEISLEEAFAGKTAQIRVPASISCTECSGSGAKPGTQPVTCSMCHGHGKVRATQGFFSIERTCPQCQGRGQTIKDPCPKCAGQGRVTEERSLSVNIPAGIEDGTRIRLANEGEAGLRGGPSGDLYIFLAVKPHEFFQRDGADLYCKVPISMTTAALGGSFEVTTLDGTQTKVKVPEGTQNGRQFRLKGKGMPVLRQPNVGDLYIQTAVETPQNLSRRQRELLEEFEQLSSQDNSPQSSGFFARMKDFFESFGER.

The J domain maps to 4 to 69 (DFYETLGVQK…QKRAAYDRFG (66 aa)). The CR-type zinc finger occupies 133-211 (GKTAQIRVPA…CAGQGRVTEE (79 aa)). Positions 146, 149, 163, 166, 185, 188, 199, and 202 each coordinate Zn(2+). CXXCXGXG motif repeat units lie at residues 146–153 (CTECSGSG), 163–170 (CSMCHGHG), 185–192 (CPQCQGRG), and 199–206 (CPKCAGQG).

The protein belongs to the DnaJ family. In terms of assembly, homodimer. Requires Zn(2+) as cofactor.

It localises to the cytoplasm. Participates actively in the response to hyperosmotic and heat shock by preventing the aggregation of stress-denatured proteins and by disaggregating proteins, also in an autonomous, DnaK-independent fashion. Unfolded proteins bind initially to DnaJ; upon interaction with the DnaJ-bound protein, DnaK hydrolyzes its bound ATP, resulting in the formation of a stable complex. GrpE releases ADP from DnaK; ATP binding to DnaK triggers the release of the substrate protein, thus completing the reaction cycle. Several rounds of ATP-dependent interactions between DnaJ, DnaK and GrpE are required for fully efficient folding. Also involved, together with DnaK and GrpE, in the DNA replication of plasmids through activation of initiation proteins. The chain is Chaperone protein DnaJ from Mesorhizobium japonicum (strain LMG 29417 / CECT 9101 / MAFF 303099) (Mesorhizobium loti (strain MAFF 303099)).